The sequence spans 246 residues: 3'(2'),5'-bisphosphate nucleotidase CysQ (246 aa).

Mg(2+) is bound by residues Glu-64, Asp-83, Leu-85, Asp-86, and Asp-205. Residue Glu-64 participates in substrate binding. Substrate-binding positions include 85-88 (LDGT) and Asp-205.

Belongs to the inositol monophosphatase superfamily. CysQ family. Mg(2+) serves as cofactor.

It is found in the cell inner membrane. The catalysed reaction is adenosine 3',5'-bisphosphate + H2O = AMP + phosphate. Its function is as follows. Converts adenosine-3',5'-bisphosphate (PAP) to AMP. The chain is 3'(2'),5'-bisphosphate nucleotidase CysQ from Salmonella typhimurium (strain LT2 / SGSC1412 / ATCC 700720).